Consider the following 611-residue polypeptide: Leukotriene A-4 hydrolase (611 aa).

N6-acetyllysine is present on K73. Residues 135–137 (QCQ) and 267–272 (SYGGME) each bind a peptide. Zn(2+) is bound at residue H296. E297 acts as the Proton acceptor in catalysis. H300 and E319 together coordinate Zn(2+). At K337 the chain carries N6-acetyllysine. Y384 (proton donor) is an active-site residue. At K414 the chain carries N6-acetyllysine. A Phosphoserine modification is found at S416. An a peptide-binding site is contributed by 564–566 (RMK). At K573 the chain carries N6-acetyllysine.

It belongs to the peptidase M1 family. Monomer. Requires Zn(2+) as cofactor. Phosphorylation at Ser-416 inhibits leukotriene-A4 hydrolase activity. activity.

It is found in the cytoplasm. It carries out the reaction leukotriene A4 + H2O = leukotriene B4. It catalyses the reaction (5S,6S)-epoxy-(18R)-hydroxy-(7E,9E,11Z,14Z,16E)-eicosapentaenoate + H2O = resolvin E1. The enzyme catalyses (5S,6S)-epoxy-(18S)-hydroxy-(7E,9E,11Z,14Z,16E)-eicosapentaenoate + H2O = 18S-resolvin E1. The catalysed reaction is Release of the N-terminal residue from a tripeptide.. The protein operates within lipid metabolism; leukotriene B4 biosynthesis. Inhibited by bestatin. The epoxide hydrolase activity is restrained by suicide inactivation that involves binding of LTA4 to Tyr-379. 4-(4-benzylphenyl)thiazol-2-amine (ARM1) selectively inhibits the epoxide hydrolase activity. Bifunctional zinc metalloenzyme that comprises both epoxide hydrolase (EH) and aminopeptidase activities. Acts as an epoxide hydrolase to catalyze the conversion of LTA4 to the pro-inflammatory mediator leukotriene B4 (LTB4). Also has aminopeptidase activity, with high affinity for N-terminal arginines of various synthetic tripeptides. In addition to its pro-inflammatory EH activity, may also counteract inflammation by its aminopeptidase activity, which inactivates by cleavage another neutrophil attractant, the tripeptide Pro-Gly-Pro (PGP), a bioactive fragment of collagen generated by the action of matrix metalloproteinase-9 (MMP9) and prolylendopeptidase (PREPL). Involved also in the biosynthesis of resolvin E1 and 18S-resolvin E1 from eicosapentaenoic acid, two lipid mediators that show potent anti-inflammatory and pro-resolving actions. The chain is Leukotriene A-4 hydrolase (LTA4H) from Cavia porcellus (Guinea pig).